The sequence spans 763 residues: Xaa-Pro dipeptidyl-peptidase (763 aa).

Residues serine 348, aspartate 468, and histidine 498 each act as charge relay system in the active site.

This sequence belongs to the peptidase S15 family. As to quaternary structure, homodimer.

It is found in the cytoplasm. The enzyme catalyses Hydrolyzes Xaa-Pro-|- bonds to release unblocked, N-terminal dipeptides from substrates including Ala-Pro-|-p-nitroanilide and (sequentially) Tyr-Pro-|-Phe-Pro-|-Gly-Pro-|-Ile.. In terms of biological role, removes N-terminal dipeptides sequentially from polypeptides having unsubstituted N-termini provided that the penultimate residue is proline. The polypeptide is Xaa-Pro dipeptidyl-peptidase (pepX) (Lactococcus lactis subsp. lactis (strain IL1403) (Streptococcus lactis)).